The chain runs to 1120 residues: Transcription-repair-coupling factor (1120 aa).

Residues 591–756 (DLSNGMLMDR…MTGLKELSII (166 aa)) enclose the Helicase ATP-binding domain. 604-611 (GDVGFGKT) is an ATP binding site. Positions 709-712 (DEEQ) match the DEEQ box motif. One can recognise a Helicase C-terminal domain in the interval 777-931 (IIRDALLHEH…GFTIASHDMD (155 aa)).

The protein in the N-terminal section; belongs to the UvrB family. This sequence in the C-terminal section; belongs to the helicase family. RecG subfamily.

It is found in the cytoplasm. Functionally, couples transcription and DNA repair by recognizing RNA polymerase (RNAP) stalled at DNA lesions. Mediates ATP-dependent release of RNAP and its truncated transcript from the DNA, and recruitment of nucleotide excision repair machinery to the damaged site. This chain is Transcription-repair-coupling factor, found in Rickettsia bellii (strain RML369-C).